We begin with the raw amino-acid sequence, 255 residues long: 3-dehydroquinate dehydratase (255 aa).

3-dehydroquinate contacts are provided by residues 46-48 and Arg-82; that span reads EWR. Catalysis depends on His-143, which acts as the Proton donor/acceptor. Lys-170 (schiff-base intermediate with substrate) is an active-site residue. The 3-dehydroquinate site is built by Arg-213, Ser-232, and Gln-236.

The protein belongs to the type-I 3-dehydroquinase family. In terms of assembly, homodimer.

The enzyme catalyses 3-dehydroquinate = 3-dehydroshikimate + H2O. The protein operates within metabolic intermediate biosynthesis; chorismate biosynthesis; chorismate from D-erythrose 4-phosphate and phosphoenolpyruvate: step 3/7. Its function is as follows. Involved in the third step of the chorismate pathway, which leads to the biosynthesis of aromatic amino acids. Catalyzes the cis-dehydration of 3-dehydroquinate (DHQ) and introduces the first double bond of the aromatic ring to yield 3-dehydroshikimate. In Bacillus subtilis (strain 168), this protein is 3-dehydroquinate dehydratase.